Consider the following 96-residue polypeptide: Small ribosomal subunit protein bS6 (96 aa).

It belongs to the bacterial ribosomal protein bS6 family.

In terms of biological role, binds together with bS18 to 16S ribosomal RNA. The chain is Small ribosomal subunit protein bS6 from Streptococcus pneumoniae serotype 19F (strain G54).